The primary structure comprises 303 residues: Porphobilinogen deaminase (303 aa).

Residue Cys-240 is modified to S-(dipyrrolylmethanemethyl)cysteine.

The protein belongs to the HMBS family. Monomer. It depends on dipyrromethane as a cofactor.

It carries out the reaction 4 porphobilinogen + H2O = hydroxymethylbilane + 4 NH4(+). It participates in porphyrin-containing compound metabolism; protoporphyrin-IX biosynthesis; coproporphyrinogen-III from 5-aminolevulinate: step 2/4. In terms of biological role, tetrapolymerization of the monopyrrole PBG into the hydroxymethylbilane pre-uroporphyrinogen in several discrete steps. The protein is Porphobilinogen deaminase of Stenotrophomonas maltophilia (strain R551-3).